Consider the following 105-residue polypeptide: Immunoglobulin lambda-like polypeptide 1 (105 aa).

The c region stretch occupies residues 1-105 (QPKSDPLVTL…EKSVSPAECS (105 aa)). The region spanning 6 to 100 (PLVTLFLPSL…EGNTVEKSVS (95 aa)) is the Ig-like C1-type domain. A disulfide bridge connects residues Cys-27 and Cys-86.

In terms of assembly, associates non-covalently with VPREB1A. Interacts with SYNV1/HRD1 (via N-terminus); this interaction leads to increased IGLL1 ubiquitination and degradation in pre-B cells, possibly through a lysosomal, not proteasomal, pathway.

Its subcellular location is the endoplasmic reticulum. It is found in the secreted. Its function is as follows. Critical for B-cell development. This is Immunoglobulin lambda-like polypeptide 1 (Igll1) from Mus spretus (Western Mediterranean mouse).